The sequence spans 410 residues: E3 ubiquitin-protein ligase ICP0 (410 aa).

Residues 46-85 form an RING-type zinc finger; the sequence is CPICLDVAATEAQTLPCMHKFCLDCIQRWTLTSTACPLCN. A disordered region spans residues 243 to 410; sequence TSESEAHSDS…IFIDLTQDDD (168 aa). Residues 287 to 315 show a composition bias toward basic residues; that stretch reads APRRSPRRARRAAVLRREQRRTRCLRRGR. Composition is skewed to low complexity over residues 329-340 and 348-399; these read SSGEGSSAQHGA and GSAN…PRSA.

Auto-ubiquitinated.

The catalysed reaction is S-ubiquitinyl-[E2 ubiquitin-conjugating enzyme]-L-cysteine + [acceptor protein]-L-lysine = [E2 ubiquitin-conjugating enzyme]-L-cysteine + N(6)-ubiquitinyl-[acceptor protein]-L-lysine.. Its function is as follows. Evades nuclear antiviral defenses triggered by dsDNA viruses. Acts during the initial stages of lytic infection and the reactivation of latent viral genome. Prevents the antiviral effect of nuclear bodies by degrading host PML and SP100. The chain is E3 ubiquitin-protein ligase ICP0 (EP0) from Sus scrofa (Pig).